The following is a 485-amino-acid chain: Malonate-semialdehyde dehydrogenase (485 aa).

NAD(+)-binding residues include Phe-155, Lys-179, Glu-182, Arg-183, and Ser-232. Cys-287 serves as the catalytic Nucleophile. Glu-386 is a binding site for NAD(+).

The protein belongs to the aldehyde dehydrogenase family. IolA subfamily. Homotetramer.

It catalyses the reaction 3-oxopropanoate + NAD(+) + CoA + H2O = hydrogencarbonate + acetyl-CoA + NADH + H(+). The catalysed reaction is 2-methyl-3-oxopropanoate + NAD(+) + CoA + H2O = propanoyl-CoA + hydrogencarbonate + NADH + H(+). Its pathway is polyol metabolism; myo-inositol degradation into acetyl-CoA; acetyl-CoA from myo-inositol: step 7/7. Functionally, catalyzes the oxidation of malonate semialdehyde (MSA) and methylmalonate semialdehyde (MMSA) into acetyl-CoA and propanoyl-CoA, respectively. Is involved in a myo-inositol catabolic pathway. Bicarbonate, and not CO2, is the end-product of the enzymatic reaction. The protein is Malonate-semialdehyde dehydrogenase of Halalkalibacterium halodurans (strain ATCC BAA-125 / DSM 18197 / FERM 7344 / JCM 9153 / C-125) (Bacillus halodurans).